A 327-amino-acid polypeptide reads, in one-letter code: AA9 family lytic polysaccharide monooxygenase G (327 aa).

The signal sequence occupies residues 1 to 20 (MKLNLASLCFLASIAPLVSG). Cu(2+) is bound by residues His-21 and His-96. Cys-62 and Cys-185 form a disulfide bridge. An O2-binding site is contributed by His-172. Tyr-182 serves as a coordination point for Cu(2+). A glycan (N-linked (GlcNAc...) asparagine) is linked at Asn-290. Positions 291-327 (GTIKKYYQCGGQGWTGSGSCEAGTSCREWNTWYFQCV) constitute a CBM1 domain.

Belongs to the polysaccharide monooxygenase AA9 family. Cu(2+) serves as cofactor.

The protein localises to the secreted. The catalysed reaction is [(1-&gt;4)-beta-D-glucosyl]n+m + reduced acceptor + O2 = 4-dehydro-beta-D-glucosyl-[(1-&gt;4)-beta-D-glucosyl]n-1 + [(1-&gt;4)-beta-D-glucosyl]m + acceptor + H2O.. In terms of biological role, lytic polysaccharide monooxygenase (LPMO) that depolymerizes crystalline and amorphous polysaccharides via the oxidation of scissile alpha- or beta-(1-4)-glycosidic bonds, yielding C1 or C4 oxidation products. Catalysis by LPMOs requires the reduction of the active-site copper from Cu(II) to Cu(I) by a reducing agent and H(2)O(2) or O(2) as a cosubstrate. The polypeptide is AA9 family lytic polysaccharide monooxygenase G (Aspergillus tamarii).